We begin with the raw amino-acid sequence, 317 residues long: Transaldolase (317 aa).

Catalysis depends on lysine 126, which acts as the Schiff-base intermediate with substrate.

It belongs to the transaldolase family. Type 1 subfamily. In terms of assembly, homodimer.

Its subcellular location is the cytoplasm. It catalyses the reaction D-sedoheptulose 7-phosphate + D-glyceraldehyde 3-phosphate = D-erythrose 4-phosphate + beta-D-fructose 6-phosphate. It participates in carbohydrate degradation; pentose phosphate pathway; D-glyceraldehyde 3-phosphate and beta-D-fructose 6-phosphate from D-ribose 5-phosphate and D-xylulose 5-phosphate (non-oxidative stage): step 2/3. Its function is as follows. Transaldolase is important for the balance of metabolites in the pentose-phosphate pathway. The protein is Transaldolase of Burkholderia lata (strain ATCC 17760 / DSM 23089 / LMG 22485 / NCIMB 9086 / R18194 / 383).